A 122-amino-acid chain; its full sequence is uncharacterized protein (122 aa).

This is an uncharacterized protein from Saccharomyces cerevisiae (strain ATCC 204508 / S288c) (Baker's yeast).